The sequence spans 180 residues: Dual-action ribosomal maturation protein DarP (180 aa).

Belongs to the DarP family.

The protein localises to the cytoplasm. Member of a network of 50S ribosomal subunit biogenesis factors which assembles along the 30S-50S interface, preventing incorrect 23S rRNA structures from forming. Promotes peptidyl transferase center (PTC) maturation. The sequence is that of Dual-action ribosomal maturation protein DarP from Pasteurella multocida (strain Pm70).